The following is a 606-amino-acid chain: Armadillo repeat-containing X-linked protein 5 (606 aa).

The disordered stretch occupies residues 1 to 85 (MIGSKTKRKA…KVKKKKDKTN (85 aa)). Residues 15-26 (GASSKPGTNSPA) show a composition bias toward polar residues. Basic and acidic residues predominate over residues 40 to 59 (VKAEPKEEWGNQAEARDEAV). 4 ARM repeats span residues 349–388 (CKSR…GISP), 470–509 (VKFD…CLSK), 511–551 (QANT…NINF), and 568–606 (SELI…ILKL).

The protein belongs to the eutherian X-chromosome-specific Armcx family. As to expression, highly expressed in the developing neural tissues, neural crest derivatives and hind limbs.

The protein is Armadillo repeat-containing X-linked protein 5 (Armcx5) of Mus musculus (Mouse).